We begin with the raw amino-acid sequence, 249 residues long: MADS-box transcription factor 17 (249 aa).

The region spanning Met1–Gly61 is the MADS-box domain. The 91-residue stretch at His88–Ser178 folds into the K-box domain. The interval Ala228–Leu249 is disordered.

As to quaternary structure, may interact with the K-box of MADS6. Expressed in the floral meristem, lodicule, palea, lemma, receptacle, empty glume, stamen, pistil, and ovule.

The protein localises to the nucleus. Functionally, probable transcription factor. Plays minor but redundant roles with MADS6 in floral development. The polypeptide is MADS-box transcription factor 17 (MADS17) (Oryza sativa subsp. japonica (Rice)).